A 94-amino-acid chain; its full sequence is Phosphoribosyl-ATP pyrophosphatase (94 aa).

This sequence belongs to the PRA-PH family.

Its subcellular location is the cytoplasm. It catalyses the reaction 1-(5-phospho-beta-D-ribosyl)-ATP + H2O = 1-(5-phospho-beta-D-ribosyl)-5'-AMP + diphosphate + H(+). It participates in amino-acid biosynthesis; L-histidine biosynthesis; L-histidine from 5-phospho-alpha-D-ribose 1-diphosphate: step 2/9. This is Phosphoribosyl-ATP pyrophosphatase from Pyrobaculum neutrophilum (strain DSM 2338 / JCM 9278 / NBRC 100436 / V24Sta) (Thermoproteus neutrophilus).